A 341-amino-acid polypeptide reads, in one-letter code: Ferredoxin--NADP reductase (341 aa).

Asp38, Gln46, Tyr51, Val91, Phe125, Asp292, and Thr333 together coordinate FAD.

This sequence belongs to the ferredoxin--NADP reductase type 2 family. Homodimer. FAD is required as a cofactor.

The enzyme catalyses 2 reduced [2Fe-2S]-[ferredoxin] + NADP(+) + H(+) = 2 oxidized [2Fe-2S]-[ferredoxin] + NADPH. In Gluconacetobacter diazotrophicus (strain ATCC 49037 / DSM 5601 / CCUG 37298 / CIP 103539 / LMG 7603 / PAl5), this protein is Ferredoxin--NADP reductase.